Consider the following 1404-residue polypeptide: DNA-directed RNA polymerase subunit beta' (1404 aa).

Residues Cys-70, Cys-72, Cys-85, and Cys-88 each contribute to the Zn(2+) site. Mg(2+) contacts are provided by Asp-460, Asp-462, and Asp-464. Zn(2+)-binding residues include Cys-814, Cys-888, Cys-895, and Cys-898.

It belongs to the RNA polymerase beta' chain family. The RNAP catalytic core consists of 2 alpha, 1 beta, 1 beta' and 1 omega subunit. When a sigma factor is associated with the core the holoenzyme is formed, which can initiate transcription. Mg(2+) serves as cofactor. Requires Zn(2+) as cofactor.

The catalysed reaction is RNA(n) + a ribonucleoside 5'-triphosphate = RNA(n+1) + diphosphate. Functionally, DNA-dependent RNA polymerase catalyzes the transcription of DNA into RNA using the four ribonucleoside triphosphates as substrates. The polypeptide is DNA-directed RNA polymerase subunit beta' (Shewanella amazonensis (strain ATCC BAA-1098 / SB2B)).